We begin with the raw amino-acid sequence, 177 residues long: Large ribosomal subunit protein uL6 (177 aa).

Belongs to the universal ribosomal protein uL6 family. As to quaternary structure, part of the 50S ribosomal subunit.

This protein binds to the 23S rRNA, and is important in its secondary structure. It is located near the subunit interface in the base of the L7/L12 stalk, and near the tRNA binding site of the peptidyltransferase center. The polypeptide is Large ribosomal subunit protein uL6 (Bradyrhizobium diazoefficiens (strain JCM 10833 / BCRC 13528 / IAM 13628 / NBRC 14792 / USDA 110)).